A 239-amino-acid polypeptide reads, in one-letter code: LexA repressor (239 aa).

A DNA-binding region (H-T-H motif) is located at residues 26–46 (FDEMKDALDLASKSGIHRLIT). Residues Ser-159 and Lys-197 each act as for autocatalytic cleavage activity in the active site.

Belongs to the peptidase S24 family. In terms of assembly, homodimer.

The enzyme catalyses Hydrolysis of Ala-|-Gly bond in repressor LexA.. In terms of biological role, represses a number of genes involved in the response to DNA damage (SOS response), including recA and lexA. In the presence of single-stranded DNA, RecA interacts with LexA causing an autocatalytic cleavage which disrupts the DNA-binding part of LexA, leading to derepression of the SOS regulon and eventually DNA repair. The polypeptide is LexA repressor (Rhizobium etli (strain ATCC 51251 / DSM 11541 / JCM 21823 / NBRC 15573 / CFN 42)).